We begin with the raw amino-acid sequence, 356 residues long: Nuclear hormone receptor family member nhr-169 (356 aa).

Positions 16 to 90 (DPICSVCNFS…AGMKRSLVKE (75 aa)) form a DNA-binding region, nuclear receptor. 2 consecutive NR C4-type zinc fingers follow at residues 19-40 (CSVCNFSSLIAPHFGGLVCSAC) and 56-72 (CKKDNQCKGMRKNCRAC). In terms of domain architecture, NR LBD spans 144 to 356 (DVSKILKTTP…KLYLHMGLPF (213 aa)).

This sequence belongs to the nuclear hormone receptor family.

It localises to the nucleus. Functionally, orphan nuclear receptor. The protein is Nuclear hormone receptor family member nhr-169 (nhr-169) of Caenorhabditis elegans.